A 416-amino-acid chain; its full sequence is Multifunctional CCA protein (416 aa).

The ATP site is built by glycine 8 and arginine 11. Residues glycine 8 and arginine 11 each coordinate CTP. Residues aspartate 21 and aspartate 23 each contribute to the Mg(2+) site. ATP contacts are provided by arginine 91, arginine 138, and arginine 141. CTP-binding residues include arginine 91, arginine 138, and arginine 141. The region spanning 229-331 (TGLHQELVSD…YELLQRCDAF (103 aa)) is the HD domain.

It belongs to the tRNA nucleotidyltransferase/poly(A) polymerase family. Bacterial CCA-adding enzyme type 1 subfamily. As to quaternary structure, monomer. Can also form homodimers and oligomers. Mg(2+) is required as a cofactor. Requires Ni(2+) as cofactor.

It carries out the reaction a tRNA precursor + 2 CTP + ATP = a tRNA with a 3' CCA end + 3 diphosphate. It catalyses the reaction a tRNA with a 3' CCA end + 2 CTP + ATP = a tRNA with a 3' CCACCA end + 3 diphosphate. In terms of biological role, catalyzes the addition and repair of the essential 3'-terminal CCA sequence in tRNAs without using a nucleic acid template. Adds these three nucleotides in the order of C, C, and A to the tRNA nucleotide-73, using CTP and ATP as substrates and producing inorganic pyrophosphate. tRNA 3'-terminal CCA addition is required both for tRNA processing and repair. Also involved in tRNA surveillance by mediating tandem CCA addition to generate a CCACCA at the 3' terminus of unstable tRNAs. While stable tRNAs receive only 3'-terminal CCA, unstable tRNAs are marked with CCACCA and rapidly degraded. This is Multifunctional CCA protein from Xylella fastidiosa (strain M12).